Reading from the N-terminus, the 75-residue chain is Translational regulator CsrA (75 aa).

This sequence belongs to the CsrA/RsmA family. Homodimer; the beta-strands of each monomer intercalate to form a hydrophobic core, while the alpha-helices form wings that extend away from the core.

The protein resides in the cytoplasm. In terms of biological role, a translational regulator that binds mRNA to regulate translation initiation and/or mRNA stability. Usually binds in the 5'-UTR at or near the Shine-Dalgarno sequence preventing ribosome-binding, thus repressing translation. Its main target seems to be the major flagellin gene, while its function is anatagonized by FliW. This is Translational regulator CsrA from Acetivibrio thermocellus (strain ATCC 27405 / DSM 1237 / JCM 9322 / NBRC 103400 / NCIMB 10682 / NRRL B-4536 / VPI 7372) (Clostridium thermocellum).